Consider the following 172-residue polypeptide: Adenine phosphoribosyltransferase (172 aa).

Belongs to the purine/pyrimidine phosphoribosyltransferase family. As to quaternary structure, homodimer.

It is found in the cytoplasm. The enzyme catalyses AMP + diphosphate = 5-phospho-alpha-D-ribose 1-diphosphate + adenine. It participates in purine metabolism; AMP biosynthesis via salvage pathway; AMP from adenine: step 1/1. Its function is as follows. Catalyzes a salvage reaction resulting in the formation of AMP, that is energically less costly than de novo synthesis. The chain is Adenine phosphoribosyltransferase from Clostridium perfringens (strain ATCC 13124 / DSM 756 / JCM 1290 / NCIMB 6125 / NCTC 8237 / Type A).